We begin with the raw amino-acid sequence, 386 residues long: MFPEPPTPGPPSPDTPPDSSRISHGPVPPWALATIVLVSGLLIFSCCFCLYRKSCRRRTGKKSQAQAQVHLQEVKGLGQSYIDKVQPEVEELEPAPSGPGQQVADKHELGRLQYSLDYDFQSGQLLVGILQAMGLAALDLGGSSDPYVRVYLLPDKRRRYETKVHRQTLNPHFGETFAFKVPYVELGGRVLVMAVYDFDRFSRNDAIGEVRVPMSSVDLGRPVQAWRELQAAPREEQEKLGDICFSLRYVPTAGKLTVIVLEAKNLKKMDVGGLSDPYVKVHLLQGGKKVRKKKTTIKKNTLNPYYNEAFSFEVPCDQVQKVQVELTVLDYDKLGKNEAIGRVAVGAAAGGAGLRHWADMLANPRRPIAQWHSLRPPDRVRLLPAP.

Over residues 1–16 (MFPEPPTPGPPSPDTP) the composition is skewed to pro residues. The tract at residues 1 to 23 (MFPEPPTPGPPSPDTPPDSSRIS) is disordered. Residues 1-24 (MFPEPPTPGPPSPDTPPDSSRISH) are Vesicular-facing. The helical transmembrane segment at 25-45 (GPVPPWALATIVLVSGLLIFS) threads the bilayer. The Cytoplasmic portion of the chain corresponds to 46–386 (CCFCLYRKSC…PDRVRLLPAP (341 aa)). C2 domains lie at 108–227 (ELGR…QAWR) and 239–372 (KLGD…AQWH). Ca(2+) is bound by residues Leu138, Asp139, Asp145, Asp197, Phe198, Asp199, Ser202, Asp205, Asp270, Asp276, Asp330, and Asp332.

It belongs to the synaptotagmin family. Homodimer. Interacts with both alpha- and beta-tubulin. Ca(2+) serves as cofactor.

It localises to the cytoplasmic vesicle. Its subcellular location is the secretory vesicle. The protein localises to the synaptic vesicle membrane. It is found in the recycling endosome membrane. Its function is as follows. May be involved in Ca(2+)-dependent exocytosis of secretory vesicles through Ca(2+) and phospholipid binding to the C2 domain or may serve as Ca(2+) sensors in the process of vesicular trafficking and exocytosis. Regulates the Ca(2+)-dependent secretion of norepinephrine in PC12 cells. Required for export from the endocytic recycling compartment to the cell surface. The chain is Synaptotagmin-5 (SYT5) from Homo sapiens (Human).